The primary structure comprises 77 residues: NAD(P)H-quinone oxidoreductase subunit L (77 aa).

2 helical membrane-spanning segments follow: residues phenylalanine 12–tyrosine 32 and leucine 47–leucine 67.

This sequence belongs to the complex I NdhL subunit family. As to quaternary structure, NDH-1 can be composed of about 15 different subunits; different subcomplexes with different compositions have been identified which probably have different functions.

The protein resides in the cellular thylakoid membrane. The enzyme catalyses a plastoquinone + NADH + (n+1) H(+)(in) = a plastoquinol + NAD(+) + n H(+)(out). It carries out the reaction a plastoquinone + NADPH + (n+1) H(+)(in) = a plastoquinol + NADP(+) + n H(+)(out). NDH-1 shuttles electrons from an unknown electron donor, via FMN and iron-sulfur (Fe-S) centers, to quinones in the respiratory and/or the photosynthetic chain. The immediate electron acceptor for the enzyme in this species is believed to be plastoquinone. Couples the redox reaction to proton translocation, and thus conserves the redox energy in a proton gradient. Cyanobacterial NDH-1 also plays a role in inorganic carbon-concentration. This Prochlorococcus marinus (strain MIT 9515) protein is NAD(P)H-quinone oxidoreductase subunit L.